Reading from the N-terminus, the 435-residue chain is Type A flavoprotein fprA (435 aa).

The zinc metallo-hydrolase stretch occupies residues 48 to 228 (ANGTTYNAYA…PFRSFVAQAL (181 aa)). Residues histidine 98, glutamate 100, aspartate 102, histidine 167, aspartate 186, and histidine 243 each coordinate Fe cation. Residues 276-415 (LLIFYVSAYG…EGRAFGRRLA (140 aa)) enclose the Flavodoxin-like domain.

This sequence in the N-terminal section; belongs to the zinc metallo-hydrolase group 3 family. As to quaternary structure, homodimer. FMN is required as a cofactor. The cofactor is Fe cation.

Functionally, low-potential electron donor to a number of redox enzymes. In Rhodobacter capsulatus (strain ATCC BAA-309 / NBRC 16581 / SB1003), this protein is Type A flavoprotein fprA (fprA).